We begin with the raw amino-acid sequence, 127 residues long: Large ribosomal subunit protein uL18 (127 aa).

This sequence belongs to the universal ribosomal protein uL18 family. In terms of assembly, part of the 50S ribosomal subunit; part of the 5S rRNA/L5/L18/L25 subcomplex. Contacts the 5S and 23S rRNAs.

Its function is as follows. This is one of the proteins that bind and probably mediate the attachment of the 5S RNA into the large ribosomal subunit, where it forms part of the central protuberance. This chain is Large ribosomal subunit protein uL18, found in Streptomyces avermitilis (strain ATCC 31267 / DSM 46492 / JCM 5070 / NBRC 14893 / NCIMB 12804 / NRRL 8165 / MA-4680).